The primary structure comprises 173 residues: Protein FAM180A (173 aa).

Residues 1-17 (MHWKMLLLLLLYYNAEA) form the signal peptide.

Belongs to the FAM180 family.

It is found in the secreted. The polypeptide is Protein FAM180A (FAM180A) (Homo sapiens (Human)).